The sequence spans 155 residues: Ribosomal RNA large subunit methyltransferase H (155 aa).

Residues leucine 73, glycine 104, and 123–128 (ISKMTF) each bind S-adenosyl-L-methionine.

The protein belongs to the RNA methyltransferase RlmH family. As to quaternary structure, homodimer.

Its subcellular location is the cytoplasm. It carries out the reaction pseudouridine(1915) in 23S rRNA + S-adenosyl-L-methionine = N(3)-methylpseudouridine(1915) in 23S rRNA + S-adenosyl-L-homocysteine + H(+). In terms of biological role, specifically methylates the pseudouridine at position 1915 (m3Psi1915) in 23S rRNA. This chain is Ribosomal RNA large subunit methyltransferase H, found in Francisella tularensis subsp. novicida (strain U112).